The chain runs to 148 residues: ATP synthase epsilon chain (148 aa).

It belongs to the ATPase epsilon chain family. As to quaternary structure, F-type ATPases have 2 components, CF(1) - the catalytic core - and CF(0) - the membrane proton channel. CF(1) has five subunits: alpha(3), beta(3), gamma(1), delta(1), epsilon(1). CF(0) has three main subunits: a, b and c.

The protein resides in the cell membrane. Produces ATP from ADP in the presence of a proton gradient across the membrane. The chain is ATP synthase epsilon chain from Streptococcus thermophilus (strain ATCC BAA-250 / LMG 18311).